The chain runs to 1074 residues: Probable phospholipid-transporting ATPase tat-5 (1074 aa).

Residues methionine 1–aspartate 26 are disordered. Positions serine 10–aspartate 26 are enriched in low complexity. 4 helical membrane passes run phenylalanine 118–methionine 138, phenylalanine 143–leucine 163, leucine 354–glycine 374, and leucine 378–leucine 398. Aspartate 442 acts as the 4-aspartylphosphate intermediate in catalysis. ATP-binding residues include aspartate 442, lysine 443, threonine 444, glutamate 524, phenylalanine 570, lysine 575, lysine 594, arginine 623, threonine 624, threonine 704, glycine 705, aspartate 706, arginine 786, and lysine 792. Aspartate 442 contributes to the Mg(2+) binding site. Threonine 444 is a Mg(2+) binding site. Aspartate 813 is a binding site for Mg(2+). Residues asparagine 816 and aspartate 817 each contribute to the ATP site. Residue aspartate 817 coordinates Mg(2+). The next 5 membrane-spanning stretches (helical) occupy residues alanine 886–valine 906, isoleucine 954–phenylalanine 974, phenylalanine 978–alanine 998, tryptophan 1006–phenylalanine 1026, and tryptophan 1038–valine 1058.

It belongs to the cation transport ATPase (P-type) (TC 3.A.3) family. Type IV subfamily. The cofactor is Mg(2+).

Its subcellular location is the cell membrane. The catalysed reaction is ATP + H2O + phospholipidSide 1 = ADP + phosphate + phospholipidSide 2.. Functionally, plays a role in regulating membrane trafficking of cargo proteins during embryogenesis. Regulates snx-3 retromer-mediated endosomal sorting of mig-14, a transporter of Wnt egl-20 morphogen. Together with mon-2 and pad-1, may participate in the formation of endosomal carriers that direct mig-14 trafficking back to Golgi, away from lysosomal degradation. Required for Wnt egl-20 gradient formation along the anteroposterior body axis and migration of QL neuroblast descendants toward the posterior part. Maintains phosphatidylethanolamine (PE) asymmetry at the cell membrane and prevents the budding of ectosome vesicles that affect intercellular communication and morphogenesis. The chain is Probable phospholipid-transporting ATPase tat-5 (tat-5) from Caenorhabditis elegans.